A 124-amino-acid polypeptide reads, in one-letter code: Apolipoprotein C-IV (124 aa).

The signal sequence occupies residues 1–27 (MLLPRRGLRTLPSLCLYILVLVWVVAC).

Belongs to the apolipoprotein C4 family. Post-translationally, glycosylated; contains sialic acid. Present in up to five sialylated isoforms. In terms of tissue distribution, blood plasma, associated primarily with VLDL and HDL. Expressed mainly in the liver.

Its subcellular location is the secreted. Its function is as follows. May participate in lipoprotein metabolism. The chain is Apolipoprotein C-IV (APOC4) from Oryctolagus cuniculus (Rabbit).